The primary structure comprises 981 residues: Anoctamin-3 (981 aa).

A compositionally biased stretch (polar residues) spans 1–22 (MVHHSGSIQSFKQQKGMNISKS). Positions 1–33 (MVHHSGSIQSFKQQKGMNISKSEITKETSLKPS) are disordered. Residues 1 to 403 (MVHHSGSIQS…LYFAWLGWYT (403 aa)) are Cytoplasmic-facing. Residues 404 to 424 (GMLIPAAIVGLCVFFYGLFTM) form a helical membrane-spanning segment. N425, N448, and N455 each carry an N-linked (GlcNAc...) asparagine glycan. Residues 425-469 (NNSQVSQEICKATEVFMCPLCDKNCSLQRLNDSCIYAKVTYLFDN) are Extracellular-facing. A helical transmembrane segment spans residues 470-490 (GGTVFFAIFMAIWATVFLEFW). Residues 491 to 550 (KRRRSILTYTWDLIEWEEEEETLRPQFEAKYYKMEIVNPITGKPEPHQPSSDKVTRLLVS) lie on the Cytoplasmic side of the membrane. Residues 551-571 (VSGIFFMISLVITAVFGVVVY) traverse the membrane as a helical segment. The Extracellular segment spans residues 572 to 592 (RLVVMEQFASFKWNFIKQYWQ). The helical transmembrane segment at 593–613 (FATSAAAVCINFIIIMLLNLA) threads the bilayer. Topologically, residues 614-640 (YEKIAYLLTNLEYPRTESEWENSFALK) are cytoplasmic. Residues 641–661 (MFLFQFVNLNSSIFYIAFFLG) traverse the membrane as a helical segment. Over 662-761 (RFVGHPGKYN…MDEYLEMVLQ (100 aa)) the chain is Extracellular. A helical membrane pass occupies residues 762-782 (FGFTTIFVAAFPLAPLLALLN). Residues 783–810 (NIIEIRLDAYKFVTQWRRPLPARATDIG) are Cytoplasmic-facing. Residues 811–831 (IWLGILEGIGILAVITNAFVI) form a helical membrane-spanning segment. The Extracellular segment spans residues 832 to 914 (AITSDYIPRF…QYWHILAARL (83 aa)). The N-linked (GlcNAc...) asparagine glycan is linked to N866. The chain crosses the membrane as a helical span at residues 915–935 (AFIIVFEHLVFGIKSFIAYLI). At 936–981 (PDVPKGLHDRIRREKYLVQEMMYEAELEHLQQQRRKSGQPVHHEWP) the chain is on the cytoplasmic side.

It belongs to the anoctamin family. In terms of assembly, interacts with KCNT1/Slack. Highly expressed in the forebrain striatum.

The protein resides in the cell membrane. It carries out the reaction a 1,2-diacyl-sn-glycero-3-phosphocholine(in) = a 1,2-diacyl-sn-glycero-3-phosphocholine(out). The catalysed reaction is a beta-D-galactosyl-(1&lt;-&gt;1')-N-acylsphing-4-enine(out) = a beta-D-galactosyl-(1&lt;-&gt;1')-N-acylsphing-4-enine(in). Its function is as follows. Has calcium-dependent phospholipid scramblase activity; scrambles phosphatidylcholine and galactosylceramide. Seems to act as potassium channel regulator and may inhibit pain signaling; can facilitate KCNT1/Slack channel activity by promoting its full single-channel conductance at very low sodium concentrations and by increasing its sodium sensitivity. Does not exhibit calcium-activated chloride channel (CaCC) activity. The chain is Anoctamin-3 (ANO3) from Homo sapiens (Human).